A 350-amino-acid chain; its full sequence is Small ribosomal subunit biogenesis GTPase RsgA (350 aa).

Over residues 1-17 the composition is skewed to polar residues; that stretch reads MSKNKLSKGQQRRVQAN. Residues 1-35 form a disordered region; sequence MSKNKLSKGQQRRVQANHQRRLRTDRKPELDDSQL. The 171-residue stretch at 103 to 273 folds into the CP-type G domain; sequence TSVLTRPDLY…VIDSPGVREF (171 aa). GTP is bound by residues 159 to 162 and 213 to 221; these read NKID and GQSGVGKSS. Residues Cys297, Cys302, His304, and Cys310 each coordinate Zn(2+).

It belongs to the TRAFAC class YlqF/YawG GTPase family. RsgA subfamily. In terms of assembly, monomer. Associates with 30S ribosomal subunit, binds 16S rRNA. Zn(2+) serves as cofactor.

Its subcellular location is the cytoplasm. In terms of biological role, one of several proteins that assist in the late maturation steps of the functional core of the 30S ribosomal subunit. Helps release RbfA from mature subunits. May play a role in the assembly of ribosomal proteins into the subunit. Circularly permuted GTPase that catalyzes slow GTP hydrolysis, GTPase activity is stimulated by the 30S ribosomal subunit. This chain is Small ribosomal subunit biogenesis GTPase RsgA, found in Yersinia enterocolitica serotype O:8 / biotype 1B (strain NCTC 13174 / 8081).